The chain runs to 223 residues: ATP phosphoribosyltransferase (223 aa).

It belongs to the ATP phosphoribosyltransferase family. Short subfamily. In terms of assembly, heteromultimer composed of HisG and HisZ subunits.

Its subcellular location is the cytoplasm. The enzyme catalyses 1-(5-phospho-beta-D-ribosyl)-ATP + diphosphate = 5-phospho-alpha-D-ribose 1-diphosphate + ATP. It functions in the pathway amino-acid biosynthesis; L-histidine biosynthesis; L-histidine from 5-phospho-alpha-D-ribose 1-diphosphate: step 1/9. In terms of biological role, catalyzes the condensation of ATP and 5-phosphoribose 1-diphosphate to form N'-(5'-phosphoribosyl)-ATP (PR-ATP). Has a crucial role in the pathway because the rate of histidine biosynthesis seems to be controlled primarily by regulation of HisG enzymatic activity. This Sphingopyxis alaskensis (strain DSM 13593 / LMG 18877 / RB2256) (Sphingomonas alaskensis) protein is ATP phosphoribosyltransferase.